The primary structure comprises 407 residues: 12S rRNA N(4)-cytidine methyltransferase METTL15 (407 aa).

Residues 100-102, Asp119, Phe146, Asp169, and Gln176 contribute to the S-adenosyl-L-methionine site; that span reads GGH. Phosphoserine is present on Ser358.

Belongs to the methyltransferase superfamily. RsmH family.

It localises to the mitochondrion matrix. The enzyme catalyses cytidine(839) in 12S rRNA + S-adenosyl-L-methionine = N(4)-methylcytidine(839) in 12S rRNA + S-adenosyl-L-homocysteine + H(+). In terms of biological role, N4-methylcytidine (m4C) methyltransferase responsible for the methylation of position C839 in mitochondrial 12S rRNA. Involved in the stabilization of 12S rRNA folding, therefore facilitating the assembly of the mitochondrial small ribosomal subunits. This is 12S rRNA N(4)-cytidine methyltransferase METTL15 from Homo sapiens (Human).